The following is a 580-amino-acid chain: Long-chain-fatty-acid--AMP ligase FadD28 (580 aa).

Residues S421–P440 are disordered.

It belongs to the ATP-dependent AMP-binding enzyme family.

The enzyme catalyses holo-[mycocerosate synthase] + a long-chain fatty acid + ATP = a long-chain fatty acyl-[mycocerosate synthase] + AMP + diphosphate. The catalysed reaction is a long-chain fatty acid + ATP + H(+) = a long-chain fatty acyl-AMP + diphosphate. It catalyses the reaction holo-[mycocerosate synthase] + a long-chain fatty acyl-AMP = a long-chain fatty acyl-[mycocerosate synthase] + AMP + H(+). The protein operates within lipid metabolism; fatty acid biosynthesis. In terms of biological role, involved in the biosynthesis of phthiocerol dimycocerosate (PDIM), a cell wall-associated lipid found only in pathogenic mycobacteria. Catalyzes the activation of long-chain fatty acids as acyl-adenylates (acyl-AMP), which are then transferred to the multifunctional polyketide synthase Mas for further chain extension. This chain is Long-chain-fatty-acid--AMP ligase FadD28 (fadD28), found in Mycobacterium tuberculosis (strain CDC 1551 / Oshkosh).